Reading from the N-terminus, the 880-residue chain is GAS2-like protein 2 (880 aa).

Residues E32 to W159 enclose the Calponin-homology (CH) domain. Residues R180–P200 form a disordered region. A compositionally biased stretch (pro residues) spans L185–R198. Residues C201–R273 enclose the GAR domain. 4 disordered regions span residues S283–F360, W372–P437, E489–R533, and A676–V880. Polar residues predominate over residues G301–Q315. An interaction with ADORA2A region spans residues Q438–V880. Positions R506–P515 are enriched in pro residues. The span at Q725–A734 shows a compositional bias: polar residues. Basic residues-rich tracts occupy residues K757 to R767 and L774 to D785.

It belongs to the GAS2 family. Interacts with ADORA2A (via its cytoplasmic C-terminal domain). Interacts with GNAS, GNAL, GNAQ, and GNA13. Interacts with MAPRE1. In terms of tissue distribution, expressed in bronchial and nasal epithelial cells (at protein level). Expressed in brain, kidney, lung, testis, fallopian tubes, and skeletal muscle. Expressed at low levels in stomach and colon.

It localises to the cytoplasm. It is found in the cytoskeleton. The protein resides in the cell membrane. Its subcellular location is the stress fiber. The protein localises to the cilium basal body. Its function is as follows. Involved in the cross-linking of microtubules and microfilaments. Regulates microtubule dynamics and stability by interacting with microtubule plus-end tracking proteins, such as MAPRE1, to regulate microtubule growth along actin stress fibers. Enhances ADORA2-mediated adenylyl cyclase activation by acting as a scaffold to recruit trimeric G-protein complexes to ADORA2A. Regulates ciliary orientation and performance in cells located in the airway. This is GAS2-like protein 2 (GAS2L2) from Homo sapiens (Human).